The chain runs to 232 residues: Large ribosomal subunit protein uL1 (232 aa).

The protein belongs to the universal ribosomal protein uL1 family. In terms of assembly, part of the 50S ribosomal subunit.

Its function is as follows. Binds directly to 23S rRNA. The L1 stalk is quite mobile in the ribosome, and is involved in E site tRNA release. In terms of biological role, protein L1 is also a translational repressor protein, it controls the translation of the L11 operon by binding to its mRNA. The protein is Large ribosomal subunit protein uL1 of Variovorax paradoxus (strain S110).